Consider the following 516-residue polypeptide: uncharacterized protein (516 aa).

PFTB repeat units lie at residues 45-86 (RQDA…QRAD) and 401-443 (DERA…DGSE).

This is an uncharacterized protein from Sinorhizobium fredii (strain NBRC 101917 / NGR234).